The chain runs to 120 residues: Protein BEX4 (120 aa).

The segment at 1–54 (MESKEELAANNLNGENAQQENEGGEQAPTQNEEESRHLGGGEGQKPGGNIRRGR) is disordered. Residues 8 to 27 (AANNLNGENAQQENEGGEQA) are compositionally biased toward low complexity. The segment at 31 to 90 (NEEESRHLGGGEGQKPGGNIRRGRVRRLVPNFRWAIPNRHIEHNEARDDVERFVGQMMEI) is interaction with SIRT2. The segment at 31 to 120 (NEEESRHLGG…DNHYDFCLIP (90 aa)) is interaction with alpha-tubulin. Cysteine 117 serves as a coordination point for Zn(2+).

It belongs to the BEX family. Interacts with alpha-tubulin. Interacts with SIRT2. In terms of processing, ubiquitinated and degraded by the proteasome. As to expression, very high expression in heart, skeletal muscle, liver, and kidney. The levels of expression are uniform throughout the brain.

The protein localises to the cytoplasm. The protein resides in the cytoskeleton. It localises to the spindle pole. Its subcellular location is the nucleus. Its function is as follows. May play a role in microtubule deacetylation by negatively regulating the SIRT2 deacetylase activity toward alpha-tubulin and thereby participate in the control of cell cycle progression and genomic stability. In absence of reductive stress, acts as a pseudosubstrate for the CRL2(FEM1B) complex: associates with FEM1B via zinc, thereby preventing association between FEM1B and its substrates. This chain is Protein BEX4, found in Homo sapiens (Human).